The chain runs to 511 residues: Histidine ammonia-lyase (511 aa).

A cross-link (5-imidazolinone (Ala-Gly)) is located at residues 143–145 (ASG). 2,3-didehydroalanine (Ser) is present on S144.

The protein belongs to the PAL/histidase family. Post-translationally, contains an active site 4-methylidene-imidazol-5-one (MIO), which is formed autocatalytically by cyclization and dehydration of residues Ala-Ser-Gly.

It localises to the cytoplasm. The enzyme catalyses L-histidine = trans-urocanate + NH4(+). Its pathway is amino-acid degradation; L-histidine degradation into L-glutamate; N-formimidoyl-L-glutamate from L-histidine: step 1/3. This is Histidine ammonia-lyase from Idiomarina loihiensis (strain ATCC BAA-735 / DSM 15497 / L2-TR).